A 632-amino-acid chain; its full sequence is Deoxynucleoside triphosphate triphosphohydrolase SAMHD1 (632 aa).

The interval 1–22 (MKGINGAKRVRHDASPSAQDGY) is disordered. Positions 44–107 (WDVEEVCLFL…LSCLRMLCQN (64 aa)) constitute an SAM domain. GTP is bound by residues lysine 113 and valine 114. Asparagine 116 serves as a coordination point for dGTP. Positions 134, 139, and 142 each coordinate GTP. Glutamine 146, leucine 147, valine 153, and arginine 161 together coordinate dGTP. Glutamine 146 is a binding site for dATP. Glutamine 146 contributes to the dCTP binding site. Glutamine 146 serves as a coordination point for dTTP. Arginine 161 provides a ligand contact to dATP. Arginine 161 lines the dCTP pocket. DTTP is bound at residue arginine 161. An HD domain is found at 161–321 (RFEHSIGVGY…GIDVDKWDYF (161 aa)). Mn(2+) contacts are provided by histidine 164, histidine 203, and aspartate 204. DATP-binding residues include histidine 207 and histidine 212. DCTP is bound by residues histidine 207 and histidine 212. DTTP is bound by residues histidine 207 and histidine 212. Histidine 230 is an active-site residue. Aspartate 316 contributes to the Mn(2+) binding site. Positions 317, 320, 324, 338, 357, 359, 363, 371, 379, 380, 381, and 382 each coordinate dGTP. DATP-binding residues include lysine 317, tyrosine 320, and aspartate 324. Lysine 317, tyrosine 320, and aspartate 324 together coordinate dCTP. Residues lysine 317, tyrosine 320, and aspartate 324 each contribute to the dTTP site. Arginine 371 contributes to the dATP binding site. Arginine 371 contacts dCTP. A dATP-binding site is contributed by glutamine 380. Position 380 (glutamine 380) interacts with dCTP. Residue glutamine 380 participates in dTTP binding. GTP is bound by residues arginine 456, lysine 460, and lysine 529. Lysine 529 lines the dGTP pocket.

The protein belongs to the SAMHD1 family. As to quaternary structure, homodimer; in absence of GTP and dNTP. Homotetramer; in GTP- and dNTP-bound form. Interacts with rbbp8/CtIP. The cofactor is Zn(2+).

It is found in the nucleus. It localises to the chromosome. The enzyme catalyses a 2'-deoxyribonucleoside 5'-triphosphate + H2O = a 2'-deoxyribonucleoside + triphosphate + H(+). The catalysed reaction is dATP + H2O = 2'-deoxyadenosine + triphosphate + H(+). It catalyses the reaction dCTP + H2O = 2'-deoxycytidine + triphosphate + H(+). It carries out the reaction dGTP + H2O = 2'-deoxyguanosine + triphosphate + H(+). The enzyme catalyses dTTP + H2O = thymidine + triphosphate + H(+). Allosterically activated and regulated via the combined actions of GTP and dNTPs (dATP, dGTP, dTTP and dCTP): Allosteric site 1 binds GTP, while allosteric site 2 binds dNTP. Allosteric activation promotes the formation of highly active homotetramers. Protein that acts both as a host restriction factor involved in defense response to virus and as a regulator of DNA end resection at stalled replication forks. Has deoxynucleoside triphosphate (dNTPase) activity, which is required to restrict infection by viruses: dNTPase activity reduces cellular dNTP levels to levels too low for retroviral reverse transcription to occur, blocking early-stage virus replication in dendritic and other myeloid cells. Functions during S phase at stalled DNA replication forks to promote the resection of gapped or reversed forks: acts by stimulating the exonuclease activity of mre11, activating the ATR-CHK1 pathway and allowing the forks to restart replication. Ability to promote DNA end resection at stalled replication forks is independent of dNTPase activity. The polypeptide is Deoxynucleoside triphosphate triphosphohydrolase SAMHD1 (Xenopus laevis (African clawed frog)).